Here is a 389-residue protein sequence, read N- to C-terminus: Putative zinc finger CCCH domain-containing protein 10 (389 aa).

The span at 1-11 (MANVSFTFDSQ) shows a compositional bias: polar residues. The disordered stretch occupies residues 1–110 (MANVSFTFDS…QDRRGSESRM (110 aa)). Composition is skewed to basic and acidic residues over residues 12-52 (EQNK…RVSE) and 86-110 (RSHETESRLWQRARTQDRRGSESRM). 2 consecutive C3H1-type zinc fingers follow at residues 131-157 (RPGEDNCLFYMKNHLCEWGSECCYNHP) and 158-190 (PLQEIPCRIGKKLDCKAGACKRGSNCPFNHPKE). Residues 183 to 296 (CPFNHPKERD…ATATGKVSGK (114 aa)) are disordered. Composition is skewed to basic and acidic residues over residues 204-243 (PDLRRNDSGRRYNTESRSWPENKEKEVGQFRDHQDSKEDA) and 251-284 (RPRDVEMRKRSRSPDFRAKTETKEHREAEERSSR).

In Arabidopsis thaliana (Mouse-ear cress), this protein is Putative zinc finger CCCH domain-containing protein 10.